A 590-amino-acid chain; its full sequence is Protein O-linked-mannose beta-1,4-N-acetylglucosaminyltransferase 2 (590 aa).

The Cytoplasmic portion of the chain corresponds to 1-4; the sequence is MSVG. A helical; Signal-anchor for type II membrane protein membrane pass occupies residues 5-25; the sequence is TLLNGLLVSIVAALLWKYSKL. Over 26 to 590 the chain is Lumenal; that stretch reads SEHAALLEEE…PFADVLMCRT (565 aa). 3 N-linked (GlcNAc...) asparagine glycosylation sites follow: N98, N275, and N553. A Fibronectin type-III domain is found at 494-590; the sequence is RVRDPQCQTS…PFADVLMCRT (97 aa).

It belongs to the glycosyltransferase 61 family.

Its subcellular location is the endoplasmic reticulum membrane. The enzyme catalyses 3-O-(alpha-D-mannosyl)-L-threonyl-[protein] + UDP-N-acetyl-alpha-D-glucosamine = 3-O-(N-acetyl-beta-D-glucosaminyl-(1-&gt;4)-alpha-D-mannosyl)-L-threonyl-[protein] + UDP + H(+). It functions in the pathway protein modification; protein glycosylation. Functionally, O-linked mannose beta-1,4-N-acetylglucosaminyltransferase that transfers UDP-N-acetyl-D-glucosamine to the 4-position of the mannose to generate N-acetyl-D-glucosamine-beta-1,4-O-D-mannosylprotein. Involved in the biosynthesis of the phosphorylated O-mannosyl trisaccharide (N-acetylgalactosamine-beta-3-N-acetylglucosamine-beta-4-(phosphate-6-)mannose), a carbohydrate structure present in alpha-dystroglycan (DAG1), which is required for binding laminin G-like domain-containing extracellular proteins with high affinity. This Takifugu rubripes (Japanese pufferfish) protein is Protein O-linked-mannose beta-1,4-N-acetylglucosaminyltransferase 2 (pomgnt2).